The following is a 79-amino-acid chain: ATP synthase subunit c (79 aa).

2 helical membrane passes run 11–31 and 53–73; these read IAVA…IGIL and FFVV…LGLY.

It belongs to the ATPase C chain family. F-type ATPases have 2 components, F(1) - the catalytic core - and F(0) - the membrane proton channel. F(1) has five subunits: alpha(3), beta(3), gamma(1), delta(1), epsilon(1). F(0) has three main subunits: a(1), b(2) and c(10-14). The alpha and beta chains form an alternating ring which encloses part of the gamma chain. F(1) is attached to F(0) by a central stalk formed by the gamma and epsilon chains, while a peripheral stalk is formed by the delta and b chains.

The protein localises to the cell membrane. Its function is as follows. F(1)F(0) ATP synthase produces ATP from ADP in the presence of a proton or sodium gradient. F-type ATPases consist of two structural domains, F(1) containing the extramembraneous catalytic core and F(0) containing the membrane proton channel, linked together by a central stalk and a peripheral stalk. During catalysis, ATP synthesis in the catalytic domain of F(1) is coupled via a rotary mechanism of the central stalk subunits to proton translocation. In terms of biological role, key component of the F(0) channel; it plays a direct role in translocation across the membrane. A homomeric c-ring of between 10-14 subunits forms the central stalk rotor element with the F(1) delta and epsilon subunits. The polypeptide is ATP synthase subunit c (Buchnera aphidicola subsp. Acyrthosiphon pisum (strain 5A)).